The sequence spans 186 residues: UPF0397 protein LCABL_04350 (186 aa).

Helical transmembrane passes span 12–32 (VVAIGIGTAILFILKRFAVIP), 45–65 (GFLGFIATLFGPIAGFFIGFL), 77–97 (TPWWTWVFTTGLVGMVIGLFW), 112–132 (IVSFNLLQIITNVVSWSLIAP), and 150–170 (GIVSAISNSIATGVIGTILLV).

It belongs to the UPF0397 family.

Its subcellular location is the cell membrane. The polypeptide is UPF0397 protein LCABL_04350 (Lacticaseibacillus casei (strain BL23) (Lactobacillus casei)).